A 668-amino-acid chain; its full sequence is Golgin candidate 2 (668 aa).

A disordered region spans residues 22-317 (QAADSLRKDE…RQREERRRRR (296 aa)). The span at 26-39 (SLRKDEKSETHDEV) shows a compositional bias: basic and acidic residues. Composition is skewed to polar residues over residues 64–86 (GSDS…LSSS) and 100–113 (SAPS…NTKL). 2 stretches are compositionally biased toward low complexity: residues 123–141 (STPN…GGTS) and 168–178 (SSSSNVVNSRG). Composition is skewed to basic and acidic residues over residues 184–207 (TNKE…RNAP), 215–237 (THKE…RRSA), and 250–259 (GKRDGRESRR). Residues 290–302 (DESESDYESDSST) are compositionally biased toward acidic residues. Over residues 303–312 (DSERERQREE) the composition is skewed to basic and acidic residues. Positions 331–539 (AVIKERENMV…SQVEALSSEK (209 aa)) form a coiled coil. 2 consecutive transmembrane segments (helical) span residues 594-614 (KHLG…TVFL) and 622-642 (IWAV…LLSH).

Its subcellular location is the golgi apparatus membrane. In terms of biological role, golgi matrix protein playing a role in tethering of vesicles to Golgi membranes and in maintaining the overall structure of the Golgi apparatus. The sequence is that of Golgin candidate 2 (GC2) from Arabidopsis thaliana (Mouse-ear cress).